We begin with the raw amino-acid sequence, 1240 residues long: Serine/threonine-protein kinase TAO2 (1240 aa).

Phosphoserine is present on serine 9. The Protein kinase domain occupies 28 to 281; sequence FSDLREIGHG…SEVLLKHRFV (254 aa). ATP is bound by residues 34–42 and lysine 57; that span reads IGHGSFGAV. Aspartate 151 acts as the Proton acceptor in catalysis. Serine 181 carries the post-translational modification Phosphoserine. The disordered stretch occupies residues 320-463; sequence APNGPGAEAP…PTSTSSSARR (144 aa). The span at 356–380 shows a compositional bias: low complexity; sequence SSHSVPSMSISASSQSSSVNSLADA. The segment covering 381-401 has biased composition (acidic residues); it reads SDNEEEEEEEEEEEEEEEEEG. A compositionally biased stretch (basic and acidic residues) spans 402–417; the sequence is PESREMAMMQEGEHTV. Serine 422 is subject to Phosphoserine. 2 coiled-coil regions span residues 493-528 and 581-608; these read SALR…EEHS and KELA…LQEN. Residue serine 663 is modified to Phosphoserine. The stretch at 688-720 forms a coiled coil; it reads LRQHEATRELELRQLQAVQRTRAELTRLQHQTE. Phosphoserine is present on residues serine 782, serine 830, and serine 832. Positions 805 to 934 form a coiled coil; that stretch reads RILGKEGTTL…GDGCPSPDIP (130 aa). Positions 899-946 are disordered; that stretch reads VLTPVPEEEEEEEEEGGAPIGTHRDPGDGCPSPDIPPEPPPSHLRQYP. Positions 904-914 are enriched in acidic residues; the sequence is PEEEEEEEEEG. Positions 931–940 are enriched in pro residues; that stretch reads PDIPPEPPPS. The next 5 helical transmembrane spans lie at 972–992, 994–1014, 1019–1039, 1045–1065, and 1175–1195; these read LLPL…GGGL, AALL…LFLC, LPPG…VLSL, LMGV…SLAL, and LASC…LLKG. Residue leucine 999 is modified to Omega-N-methylarginine. At leucine 1037 the chain carries Phosphoserine. A disordered region spans residues 1212–1240; the sequence is LGLSASRQLPPGTVAGRRSQTRRTLPPWR.

This sequence belongs to the protein kinase superfamily. STE Ser/Thr protein kinase family. STE20 subfamily. Interacts with MAP2K3 and MAP2K6. Self-associates. Interacts with tubulins. Interacts with MAP3K7 and interferes with MAP3K7-binding to CHUK and thus prevents NF-kappa-B activation. Isoform 2 interacts with PCDH8; this complex may also include CDH2. Mg(2+) serves as cofactor. Post-translationally, autophosphorylated. Phosphorylated by ATM. Phosphorylated on Ser-1037 by MAPK14. This phosphorylation is required PCDH8 for endocytosis.

It localises to the cytoplasmic vesicle membrane. The protein localises to the cytoplasm. The protein resides in the cytoskeleton. It is found in the cell projection. Its subcellular location is the dendrite. The enzyme catalyses L-seryl-[protein] + ATP = O-phospho-L-seryl-[protein] + ADP + H(+). It carries out the reaction L-threonyl-[protein] + ATP = O-phospho-L-threonyl-[protein] + ADP + H(+). Its function is as follows. Serine/threonine-protein kinase involved in different processes such as membrane blebbing and apoptotic bodies formation DNA damage response and MAPK14/p38 MAPK stress-activated MAPK cascade. Phosphorylates itself, MBP, activated MAPK8, MAP2K3, MAP2K6 and tubulins. Activates the MAPK14/p38 MAPK signaling pathway through the specific activation and phosphorylation of the upstream MAP2K3 and MAP2K6 kinases. In response to DNA damage, involved in the G2/M transition DNA damage checkpoint by activating the p38/MAPK14 stress-activated MAPK cascade, probably by mediating phosphorylation of upstream MAP2K3 and MAP2K6 kinases. May affect microtubule organization and stability. May play a role in the osmotic stress-MAPK8 pathway. Prevents MAP3K7-mediated activation of CHUK, and thus NF-kappa-B activation. Isoform 2, but not isoform 1, is required for PCDH8 endocytosis. Following homophilic interactions between PCDH8 extracellular domains, isoform 2 phosphorylates and activates MAPK14/p38 MAPK which in turn phosphorylates isoform 2. This process leads to PCDH8 endocytosis and CDH2 cointernalization. Both isoforms are involved in MAPK14/p38 MAPK activation. The polypeptide is Serine/threonine-protein kinase TAO2 (Taok2) (Mus musculus (Mouse)).